Reading from the N-terminus, the 459-residue chain is MRNDPFQRLGLDREVLTVSQLNQRARLLLEDVFPQVWVEGELSNLARPASGHVYFTLKDSNAQIRCALFRQNALRVRQALRDGLAVKVRGKISLFEGRGDYQLIADTVEPAGDGALRLAFEALKEKLAGEGLFASERKRPLPAHPRRIGIVSSPSGAVIRDIISVFRRRAPQVELTLVPTAVQGREAVAQIVRALQLADRQGFDALILARGGGSLEDLWCFNEEAVARAVAACATPIVSAVGHETDVSISDFVADVRAPTPSAAAELLAPNAGDLQQRLDGLRRRLVLRMRDQLLRERLRLEGVARRLRHPGERLRQQAQRLDDLDMRLRRAFERQLAVRHERLVRLETRLAAQHPGRTLALLRQKLDSLAARLPRAAREVLKDRRQRLEGLAQTLNVVSPLATLGRGYSILLDERGRAIRDAGQTQPGQRLKARLAEGELEVRVEDNHRTPVTLSLLD.

It belongs to the XseA family. As to quaternary structure, heterooligomer composed of large and small subunits.

The protein resides in the cytoplasm. It catalyses the reaction Exonucleolytic cleavage in either 5'- to 3'- or 3'- to 5'-direction to yield nucleoside 5'-phosphates.. Functionally, bidirectionally degrades single-stranded DNA into large acid-insoluble oligonucleotides, which are then degraded further into small acid-soluble oligonucleotides. In Pseudomonas aeruginosa (strain ATCC 15692 / DSM 22644 / CIP 104116 / JCM 14847 / LMG 12228 / 1C / PRS 101 / PAO1), this protein is Exodeoxyribonuclease 7 large subunit.